The following is a 381-amino-acid chain: Cytochrome b (381 aa).

The next 4 membrane-spanning stretches (helical) occupy residues 34-54 (FGSLLVLCLAVQILTGLFLAM), 78-99 (WLIRNIHANGASLFFICIYLHI), 114-134 (WNIGVILLFLLMATAFVGYVL), and 179-199 (FFAFHFLLPFLIIALTMLHFL). 2 residues coordinate heme b: H84 and H98. Heme b-binding residues include H183 and H197. H202 serves as a coordination point for a ubiquinone. 4 consecutive transmembrane segments (helical) span residues 227–247 (YKDILGFFTMTLFLGALVLFL), 289–309 (LGGVLALLFSILMLLLVPFLH), 321–341 (LTQLLFWTLVANTIILTWIGG), and 348–368 (FIFIGQIASITYFSLFLIITP).

It belongs to the cytochrome b family. The cytochrome bc1 complex contains 3 respiratory subunits (MT-CYB, CYC1 and UQCRFS1), 2 core proteins (UQCRC1 and UQCRC2) and probably 6 low-molecular weight proteins. Heme b is required as a cofactor.

It is found in the mitochondrion inner membrane. Component of the ubiquinol-cytochrome c reductase complex (complex III or cytochrome b-c1 complex) that is part of the mitochondrial respiratory chain. The b-c1 complex mediates electron transfer from ubiquinol to cytochrome c. Contributes to the generation of a proton gradient across the mitochondrial membrane that is then used for ATP synthesis. The polypeptide is Cytochrome b (mt-cyb) (Heterodontus francisci (Horn shark)).